Consider the following 62-residue polypeptide: Calmodulin regulator protein PCP4 (62 aa).

The interval 1-39 (MSERQGAGATNGKDKTSGENDGQKKVQEEFDIDMDAPET) is disordered. The span at 12–28 (GKDKTSGENDGQKKVQE) shows a compositional bias: basic and acidic residues. The tract at residues 28–40 (EEFDIDMDAPETE) is acidic; binds calcium and is required for modulating the calcium-binding kinetics of calmodulin. Positions 39–62 (TERAAVAIQSQFRKFQKKKAGSQS) constitute an IQ domain.

It belongs to the PCP4 family. As to quaternary structure, binds to both calcium-free and calcium-bound calmodulin. The affinity for the calcium-bound form is 50-fold greater.

Functions as a modulator of calcium-binding by calmodulin. Thereby, regulates calmodulin activity and the different processes it controls. For instance, may play a role in neuronal differentiation through activation of calmodulin-dependent kinase signaling pathways. This is Calmodulin regulator protein PCP4 from Homo sapiens (Human).